The sequence spans 538 residues: Cytochrome P450 18a1 (538 aa).

The helical transmembrane segment at 24-44 threads the bilayer; it reads QHLLMVFLGLLALVTLLQWLV. Cysteine 466 is a heme binding site.

It belongs to the cytochrome P450 family. It depends on heme as a cofactor. In terms of tissue distribution, expressed in body wall (epidermal and muscle cells) and mid- and hind-gut.

Its subcellular location is the endoplasmic reticulum membrane. The protein resides in the microsome membrane. In terms of biological role, probably involved in steroid hormones biosynthesis. This is Cytochrome P450 18a1 (Cyp18a1) from Drosophila melanogaster (Fruit fly).